Here is a 327-residue protein sequence, read N- to C-terminus: Tetraspanin-4 (327 aa).

Residues 1–6 are Cytoplasmic-facing; sequence MRSRSN. The chain crosses the membrane as a helical span at residues 7–27; the sequence is LIGLINFFTFLLSIPILGGGI. Over 28–43 the chain is Extracellular; that stretch reads WLSSRANSTDCLRFLQ. The N-linked (GlcNAc...) asparagine glycan is linked to asparagine 34. Residues 44–64 traverse the membrane as a helical segment; it reads WPLIIIGISIMVISLAGIAGA. Residues 65-75 lie on the Cytoplasmic side of the membrane; that stretch reads CYQNKFLMWLY. A helical transmembrane segment spans residues 76–96; it reads LFTMFFVIAALIGFTIFAYVV. The Extracellular segment spans residues 97 to 235; the sequence is TDKGSGRFVM…LGSLKKSWRK (139 aa). Asparagine 187 carries N-linked (GlcNAc...) asparagine glycosylation. A helical transmembrane segment spans residues 236 to 256; it reads VSVINIVVVIILVIFYVIACA. Residues 257-287 are Cytoplasmic-facing; it reads AYQNVKRMYNDEPVGEARMTNLILVIFKFKE. Residues 288–308 traverse the membrane as a helical segment; it reads ILVQFFFGIVFLLLFNGLMVC. The Extracellular portion of the chain corresponds to 309–327; that stretch reads CCNDKFAFSVFFFGYVTYA.

This sequence belongs to the tetraspanin (TM4SF) family.

The protein localises to the membrane. Its function is as follows. May be involved in the regulation of cell differentiation. In Arabidopsis thaliana (Mouse-ear cress), this protein is Tetraspanin-4 (TET4).